Here is a 292-residue protein sequence, read N- to C-terminus: Tetratricopeptide repeat protein 1 (292 aa).

The tract at residues 20-125 (TDPQEAECLH…SSRLKEEGNE (106 aa)) is disordered. 2 stretches are compositionally biased toward basic and acidic residues: residues 36–49 (KEQH…KDVD) and 75–85 (GADKLENKPED). Residues 86–98 (DMNPSELDEEYLM) are compositionally biased toward acidic residues. S90 bears the Phosphoserine mark. Positions 99–125 (ELEKNMPDEEKKRRREESSRLKEEGNE) are enriched in basic and acidic residues. TPR repeat units follow at residues 116-149 (SSRL…CPSC), 155-188 (SVLF…NPSY), and 189-222 (IRAI…DPSV).

Interacts with the GAP domain of NF1. Interacts (via TPR repeats) with HSP90AA1 and HSPA8.

This is Tetratricopeptide repeat protein 1 (TTC1) from Bos taurus (Bovine).